The following is a 372-amino-acid chain: Oxysterol-binding protein 3 (372 aa).

Residues 1 to 10 (MGKSDRKLTE) show a composition bias toward basic and acidic residues. The segment at 1–25 (MGKSDRKLTEENSIENGVKPGKLTE) is disordered.

This sequence belongs to the OSBP family.

The protein is Oxysterol-binding protein 3 (osbC) of Dictyostelium discoideum (Social amoeba).